We begin with the raw amino-acid sequence, 333 residues long: Protoheme IX farnesyltransferase (333 aa).

Transmembrane regions (helical) follow at residues 64–84, 110–130, 133–153, 161–181, 189–209, 246–266, and 287–307; these read LICT…LNCL, TVFL…ISGV, LAAG…TVIL, IVFG…AATG, WLFG…AILL, IMGV…LLPF, and AKSL…LLLI.

It belongs to the UbiA prenyltransferase family. Protoheme IX farnesyltransferase subfamily.

It localises to the cell inner membrane. It catalyses the reaction heme b + (2E,6E)-farnesyl diphosphate + H2O = Fe(II)-heme o + diphosphate. Its pathway is porphyrin-containing compound metabolism; heme O biosynthesis; heme O from protoheme: step 1/1. Its function is as follows. Converts heme B (protoheme IX) to heme O by substitution of the vinyl group on carbon 2 of heme B porphyrin ring with a hydroxyethyl farnesyl side group. The polypeptide is Protoheme IX farnesyltransferase (Prochlorococcus marinus (strain MIT 9312)).